The chain runs to 588 residues: MDDRGNNSGEVGEFASSSMIQESIDLKLLAAESLIWTEKNVTYFGPLGKFPGKIVITRYRMVFLVGDGGKMYEQWKLDIPLGQVSRIEKVGRKTTSVAKRGDDNYGFTIYCKDYRVYRFTCNPASSDRKNVCDSLNRYAFPLSHNLPMFASVHAAETPRLMKDGWKIYSAEKEYERLGIPNSRLWKEVDINKDYKFSETYPRTFVIPTVSWEEGKPFVKKLGEFRSKERIPVLSWINQTTLASISRCSQPMTGISGKRSAEDERHLTNIMNANANCRELLILDARPAVNAKLNKAKGGGYEENYVNAPLTFLNIHNIHVVRDSLKRLLAALIPRVDEKGYYKALDESKWLNHVQSILEGAVKAVFNVDTEKQSVLIHCSDGWDRTAQLTSLAMIQLDSYYRTIEGFIVLIEKEWCSFGHKFGERIGHGDDNYSDGERSPVFVQFCDCLWQIMRQFPWAFEFTQELLICMLDELYACRYGTFLYNSEKIRLKDKKCDETTISFWSYVLENKKKFRNPMFKHGKSNKVINVNPSLCGLHVWIDYYARSNPYVVTPNHEDVQQPGAQFVDEKKQLLDEIMALDDAAQKLTA.

Residues 20–91 (IQESIDLKLL…GQVSRIEKVG (72 aa)) enclose the GRAM domain. The region spanning 164-543 (GWKIYSAEKE…CGLHVWIDYY (380 aa)) is the Myotubularin phosphatase domain. A 1,2-diacyl-sn-glycero-3-phospho-(1D-myo-inositol-3,5-bisphosphate)-binding residues include Asn-293, Asn-316, and Ile-317. The a 1,2-diacyl-sn-glycero-3-phospho-(1D-myo-inositol-3-phosphate) site is built by Asn-293, Asn-316, and Ile-317. Cys-378 functions as the Phosphocysteine intermediate in the catalytic mechanism. A 1,2-diacyl-sn-glycero-3-phospho-(1D-myo-inositol-3,5-bisphosphate)-binding residues include Ser-379, Asp-380, Gly-381, Trp-382, Asp-383, Arg-384, Lys-420, and Arg-424. A 1,2-diacyl-sn-glycero-3-phospho-(1D-myo-inositol-3-phosphate)-binding residues include Ser-379, Asp-380, Gly-381, Trp-382, Asp-383, and Arg-384. Ser-379 is a phosphate binding site. Positions 381, 382, 383, and 384 each coordinate phosphate. Arg-424 is a binding site for a 1,2-diacyl-sn-glycero-3-phospho-(1D-myo-inositol-3-phosphate). Residues 563–588 (AQFVDEKKQLLDEIMALDDAAQKLTA) are a coiled coil.

It belongs to the protein-tyrosine phosphatase family. Non-receptor class myotubularin subfamily. As to expression, expressed in embryo, larva and in adults. Expressed in a few head and tail neurons. Expressed in hypodermis, body wall and pharyngeal muscles, sheath cells, vulva, distal tip cells and coelomocytes.

It localises to the cell membrane. It is found in the cell projection. The protein resides in the phagocytic cup. The protein localises to the apical cell membrane. Its subcellular location is the cytoplasmic granule membrane. It catalyses the reaction a 1,2-diacyl-sn-glycero-3-phospho-(1D-myo-inositol-3,5-bisphosphate) + H2O = a 1,2-diacyl-sn-glycero-3-phospho-(1D-myo-inositol-5-phosphate) + phosphate. The catalysed reaction is a 1,2-diacyl-sn-glycero-3-phospho-(1D-myo-inositol-3-phosphate) + H2O = a 1,2-diacyl-sn-glycero-3-phospho-(1D-myo-inositol) + phosphate. It carries out the reaction 1,2-dioctanoyl-sn-glycero-3-phospho-(1-D-myo-inositol-3-phosphate) + H2O = 1,2-dioctanoyl-sn-glycero-3-phospho-(1D-myo-inositol) + phosphate. Lipid phosphatase that specifically dephosphorylates phosphatidylinositol 3-phosphate (PI3P) and phosphatidylinositol 3,5-bisphosphate (PI(3,5)P2). Negatively regulates accumulation of PI3P on intracellular vesicles. Negatively regulates phagocytosis of apoptotic cells probably by limiting the recruitment and/or the activation of ced-5, ced-2 and ced-12 complex. In addition, may positively regulate phagosome maturation by promoting recycling of apoptotic receptor ced-1 back to the plasma membrane. Essential for embryonic and larval development. May promote migration of distal tip cells. The polypeptide is Phosphatidylinositol-3,5-bisphosphate 3-phosphatase mtm-1 (Caenorhabditis elegans).